Consider the following 975-residue polypeptide: Glycine dehydrogenase (decarboxylating) (975 aa).

Lys-723 is modified (N6-(pyridoxal phosphate)lysine).

The protein belongs to the GcvP family. The glycine cleavage system is composed of four proteins: P, T, L and H. Pyridoxal 5'-phosphate is required as a cofactor.

The catalysed reaction is N(6)-[(R)-lipoyl]-L-lysyl-[glycine-cleavage complex H protein] + glycine + H(+) = N(6)-[(R)-S(8)-aminomethyldihydrolipoyl]-L-lysyl-[glycine-cleavage complex H protein] + CO2. In terms of biological role, the glycine cleavage system catalyzes the degradation of glycine. The P protein binds the alpha-amino group of glycine through its pyridoxal phosphate cofactor; CO(2) is released and the remaining methylamine moiety is then transferred to the lipoamide cofactor of the H protein. In Burkholderia multivorans (strain ATCC 17616 / 249), this protein is Glycine dehydrogenase (decarboxylating).